The chain runs to 254 residues: Imidazole glycerol phosphate synthase subunit HisF (254 aa).

Active-site residues include aspartate 11 and aspartate 130.

The protein belongs to the HisA/HisF family. In terms of assembly, heterodimer of HisH and HisF.

It localises to the cytoplasm. The enzyme catalyses 5-[(5-phospho-1-deoxy-D-ribulos-1-ylimino)methylamino]-1-(5-phospho-beta-D-ribosyl)imidazole-4-carboxamide + L-glutamine = D-erythro-1-(imidazol-4-yl)glycerol 3-phosphate + 5-amino-1-(5-phospho-beta-D-ribosyl)imidazole-4-carboxamide + L-glutamate + H(+). The protein operates within amino-acid biosynthesis; L-histidine biosynthesis; L-histidine from 5-phospho-alpha-D-ribose 1-diphosphate: step 5/9. Its function is as follows. IGPS catalyzes the conversion of PRFAR and glutamine to IGP, AICAR and glutamate. The HisF subunit catalyzes the cyclization activity that produces IGP and AICAR from PRFAR using the ammonia provided by the HisH subunit. This Acidiphilium cryptum (strain JF-5) protein is Imidazole glycerol phosphate synthase subunit HisF.